Consider the following 41-residue polypeptide: Large ribosomal subunit protein bL36 (41 aa).

This sequence belongs to the bacterial ribosomal protein bL36 family.

In Nitrobacter winogradskyi (strain ATCC 25391 / DSM 10237 / CIP 104748 / NCIMB 11846 / Nb-255), this protein is Large ribosomal subunit protein bL36.